The primary structure comprises 1279 residues: ATP-dependent helicase/nuclease subunit A (1279 aa).

A UvrD-like helicase ATP-binding domain is found at 4 to 499 (TKWTDEQRQA…VKLFKNFRSR (496 aa)). Residue 25–32 (AGAGAGKT) coordinates ATP. The region spanning 526–853 (EEALKVGASY…RIMSIHKSKG (328 aa)) is the UvrD-like helicase C-terminal domain.

Belongs to the helicase family. AddA subfamily. In terms of assembly, heterodimer of AddA and AddB/RexB. It depends on Mg(2+) as a cofactor.

It catalyses the reaction Couples ATP hydrolysis with the unwinding of duplex DNA by translocating in the 3'-5' direction.. The enzyme catalyses ATP + H2O = ADP + phosphate + H(+). Its function is as follows. The heterodimer acts as both an ATP-dependent DNA helicase and an ATP-dependent, dual-direction single-stranded exonuclease. Recognizes the chi site generating a DNA molecule suitable for the initiation of homologous recombination. The AddA nuclease domain is required for chi fragment generation; this subunit has the helicase and 3' -&gt; 5' nuclease activities. The chain is ATP-dependent helicase/nuclease subunit A from Clostridium botulinum (strain Hall / ATCC 3502 / NCTC 13319 / Type A).